A 444-amino-acid polypeptide reads, in one-letter code: Argininosuccinate synthase (444 aa).

Residues 17–25 (AFSGGLDTS) and alanine 43 each bind ATP. Tyrosine 99 lines the L-citrulline pocket. The ATP site is built by glycine 129 and threonine 131. Threonine 131, asparagine 135, and aspartate 136 together coordinate L-aspartate. Asparagine 135 serves as a coordination point for L-citrulline. Aspartate 136 contacts ATP. Residues arginine 139 and serine 192 each contribute to the L-citrulline site. Residue aspartate 194 participates in ATP binding. L-citrulline contacts are provided by threonine 201, glutamate 203, and glutamate 280.

This sequence belongs to the argininosuccinate synthase family. Type 2 subfamily. Homotetramer.

The protein resides in the cytoplasm. The catalysed reaction is L-citrulline + L-aspartate + ATP = 2-(N(omega)-L-arginino)succinate + AMP + diphosphate + H(+). It participates in amino-acid biosynthesis; L-arginine biosynthesis; L-arginine from L-ornithine and carbamoyl phosphate: step 2/3. This Paraburkholderia phymatum (strain DSM 17167 / CIP 108236 / LMG 21445 / STM815) (Burkholderia phymatum) protein is Argininosuccinate synthase.